A 66-amino-acid polypeptide reads, in one-letter code: Large ribosomal subunit protein bL35 (66 aa).

The protein belongs to the bacterial ribosomal protein bL35 family.

This Hyphomonas neptunium (strain ATCC 15444) protein is Large ribosomal subunit protein bL35.